Consider the following 303-residue polypeptide: Recombination-associated protein RdgC (303 aa).

Belongs to the RdgC family.

It is found in the cytoplasm. Its subcellular location is the nucleoid. Functionally, may be involved in recombination. The sequence is that of Recombination-associated protein RdgC from Edwardsiella ictaluri (strain 93-146).